Consider the following 75-residue polypeptide: Beta-defensin 30 (75 aa).

Residues 1–22 form the signal peptide; it reads MGSLQLILVLFVLLSDVPPVRS. Cystine bridges form between Cys-35–Cys-62, Cys-42–Cys-56, and Cys-46–Cys-63.

Belongs to the beta-defensin family.

It localises to the secreted. In terms of biological role, has antibacterial activity. The chain is Beta-defensin 30 (Defb30) from Rattus norvegicus (Rat).